The following is a 190-amino-acid chain: MILPITTYTDEVLHQTAKPLKGVDGAVEELIDSMFESMENASGIGLAAPQVGHSLRLLVLDISCMKSYEDVAPMVVINPHILSVKGKNLMEEGCLSVPGVQGDVQRPSSITLKYRDRNFLEQTEEFSGMLARVLQHEIDHLSGTLFIDRMEKRDRRKIQKELDDIAKGNIEVDYPLARACSRDGGGAICM.

Residues cysteine 94 and histidine 136 each contribute to the Fe cation site. Glutamate 137 is an active-site residue. Histidine 140 is a binding site for Fe cation.

The protein belongs to the polypeptide deformylase family. Fe(2+) serves as cofactor.

It catalyses the reaction N-terminal N-formyl-L-methionyl-[peptide] + H2O = N-terminal L-methionyl-[peptide] + formate. Removes the formyl group from the N-terminal Met of newly synthesized proteins. Requires at least a dipeptide for an efficient rate of reaction. N-terminal L-methionine is a prerequisite for activity but the enzyme has broad specificity at other positions. The sequence is that of Peptide deformylase from Chlorobium phaeovibrioides (strain DSM 265 / 1930) (Prosthecochloris vibrioformis (strain DSM 265)).